A 206-amino-acid polypeptide reads, in one-letter code: Peptidyl-tRNA hydrolase (206 aa).

A tRNA-binding site is contributed by Tyr14. His19 (proton acceptor) is an active-site residue. The tRNA site is built by Tyr64 and Asn66. Residues 182–206 are disordered; the sequence is FNQKNKKKKEKEQPEAATDQLLENK.

It belongs to the PTH family. As to quaternary structure, monomer.

The protein localises to the cytoplasm. It catalyses the reaction an N-acyl-L-alpha-aminoacyl-tRNA + H2O = an N-acyl-L-amino acid + a tRNA + H(+). Functionally, hydrolyzes ribosome-free peptidyl-tRNAs (with 1 or more amino acids incorporated), which drop off the ribosome during protein synthesis, or as a result of ribosome stalling. In terms of biological role, catalyzes the release of premature peptidyl moieties from peptidyl-tRNA molecules trapped in stalled 50S ribosomal subunits, and thus maintains levels of free tRNAs and 50S ribosomes. This chain is Peptidyl-tRNA hydrolase, found in Desulforamulus reducens (strain ATCC BAA-1160 / DSM 100696 / MI-1) (Desulfotomaculum reducens).